Reading from the N-terminus, the 518-residue chain is 12S seed storage globulin 1 (518 aa).

Positions 1–24 (MATTRFPSLLFYSCIFLLCNGSMA) are cleaved as a signal peptide. 2 disulfide bridges follow: cysteine 45–cysteine 78 and cysteine 121–cysteine 324. Positions 50-240 (LQAFEPLRQV…ALGISQQAAQ (191 aa)) constitute a Cupin type-1 1 domain. The segment covering 281 to 295 (QSQQEQSTQYQVGQS) has biased composition (low complexity). Positions 281–311 (QSQQEQSTQYQVGQSPQYQEGQSTQYQSGQS) are disordered. Residues 296 to 311 (PQYQEGQSTQYQSGQS) are compositionally biased toward polar residues. Residues 330 to 479 (QNIENPKRAD…AYRISRQESQ (150 aa)) enclose the Cupin type-1 2 domain. Positions 496–518 (FAQTGSQSYQDEGESSSTEKASE) are disordered.

The protein belongs to the 11S seed storage protein (globulins) family. As to quaternary structure, hexamer; each subunit is composed of an acidic and a basic chain derived from a single precursor and linked by a disulfide bond.

In terms of biological role, this is a seed storage protein. This is 12S seed storage globulin 1 from Avena sativa (Oat).